A 376-amino-acid chain; its full sequence is Anhydro-N-acetylmuramic acid kinase (376 aa).

Position 22–29 (22–29 (GTSMDGAD)) interacts with ATP.

Belongs to the anhydro-N-acetylmuramic acid kinase family.

The enzyme catalyses 1,6-anhydro-N-acetyl-beta-muramate + ATP + H2O = N-acetyl-D-muramate 6-phosphate + ADP + H(+). It participates in amino-sugar metabolism; 1,6-anhydro-N-acetylmuramate degradation. The protein operates within cell wall biogenesis; peptidoglycan recycling. Functionally, catalyzes the specific phosphorylation of 1,6-anhydro-N-acetylmuramic acid (anhMurNAc) with the simultaneous cleavage of the 1,6-anhydro ring, generating MurNAc-6-P. Is required for the utilization of anhMurNAc either imported from the medium or derived from its own cell wall murein, and thus plays a role in cell wall recycling. The sequence is that of Anhydro-N-acetylmuramic acid kinase from Neisseria gonorrhoeae (strain NCCP11945).